The following is a 310-amino-acid chain: Beta-1,3-galactosyltransferase 5 (310 aa).

The Cytoplasmic portion of the chain corresponds to Met1 to Arg7. Residues Leu8 to Leu28 traverse the membrane as a helical; Signal-anchor for type II membrane protein segment. At Asn29 to Val310 the chain is on the lumenal side. Asn130, Asn174, and Asn231 each carry an N-linked (GlcNAc...) asparagine glycan.

Belongs to the glycosyltransferase 31 family. Expressed in stomach, jejunum, colon, pancreas, small intestine, testis and gastrointestinal and pancreatic cancer cell lines. Hardly detected in lung, liver, adrenal gland and peripheral blood leukocytes.

The protein resides in the golgi apparatus membrane. The enzyme catalyses a globoside Gb4Cer (d18:1(4E)) + UDP-alpha-D-galactose = a globoside GalGb4Cer (d18:1(4E)) + UDP + H(+). It participates in protein modification; protein glycosylation. Catalyzes the transfer of Gal to GlcNAc-based acceptors with a preference for the core3 O-linked glycan GlcNAc(beta1,3)GalNAc structure. Can use glycolipid LC3Cer as an efficient acceptor. This Homo sapiens (Human) protein is Beta-1,3-galactosyltransferase 5.